Here is a 343-residue protein sequence, read N- to C-terminus: Cytoplasmic tRNA 2-thiolation protein 1 (343 aa).

The protein belongs to the TtcA family. CTU1/NCS6/ATPBD3 subfamily.

The protein localises to the cytoplasm. It participates in tRNA modification; 5-methoxycarbonylmethyl-2-thiouridine-tRNA biosynthesis. Functionally, plays a central role in 2-thiolation of mcm(5)S(2)U at tRNA wobble positions of tRNA(Lys), tRNA(Glu) and tRNA(Gln). Directly binds tRNAs and probably acts by catalyzing adenylation of tRNAs, an intermediate required for 2-thiolation. It is unclear whether it acts as a sulfurtransferase that transfers sulfur from thiocarboxylated URM1 onto the uridine of tRNAs at wobble position. The chain is Cytoplasmic tRNA 2-thiolation protein 1 from Drosophila pseudoobscura pseudoobscura (Fruit fly).